Consider the following 1549-residue polypeptide: MSLSFCGNNISSYNINDGVLQNSCFVDALNLVPHVFLLFITFPILFIGWGSQSSKVQIHHNTWLHFPGHNLRWILTFALLFVHVCEIAEGIVSDSRRESRHLHLFMPAVMGFVATTTSIVYYHNIETSNFPKLLLALFLYWVMAFITKTIKLVKYCQSGLDISNLRFCITGMMVILNGLLMAVEINVIRVRRYVFFMNPQKVKPPEDLQDLGVRFLQPFVNLLSKATYWWMNTLIISAHKKPIDLKAIGKLPIAMRAVTNYVCLKDAYEEQKKKVADHPNRTPSIWLAMYRAFGRPILLSSTFRYLADLLGFAGPLCISGIVQRVNETQNGTNNTTGISETLSSKEFLENAYVLAVLLFLALILQRTFLQASYYVTIETGINLRGALLAMIYNKILRLSTSNLSMGEMTLGQINNLVAIETNQLMWFLFLCPNLWAMPVQIIMGVILLYNLLGSSALVGAAVIVLLAPIQYFIATKLAEAQKSTLDYSTERLKKTNEILKGIKLLKLYAWEHIFCKSVEETRMKELSSLKTFALYTSLSIFMNAAIPIAAVLATFVTHAYASGNNLKPAEAFASLSLFHILVTPLFLLSTVVRFAVKAIISVQKLNEFLLSDEIGDDSWRTGESSLPFESCKKHTGVQPKTINRKQPGRYHLDSYEQSTRRLRPAETEDIAIKVTNGYFSWGSGLATLSNIDIRIPTGQLTMIVGQVGCGKSSLLLAILGEMQTLEGKVHWSNVNESEPSFEATRSRNRYSVAYAAQKPWLLNATVEENITFGSPFNKQRYKAVTDACSLQPDIDLLPFGDQTEIGERGINLSGGQRQRICVARALYQNTNIVFLDDPFSALDIHLSDHLMQEGILKFLQDDKRTLVLVTHKLQYLTHADWIIAMKDGSVLREGTLKDIQTKDVELYEHWKTLMNRQDQELEKDMEADQTTLERKTLRRAMYSREAKAQMEDEDEEEEEEEDEDDNMSTVMRLRTKMPWKTCWRYLTSGGFFLLILMIFSKLLKHSVIVAIDYWLATWTSEYSINNTGKADQTYYVAGFSILCGAGIFLCLVTSLTVEWMGLTAAKNLHHNLLNKIILGPIRFFDTTPLGLILNRFSADTNIIDQHIPPTLESLTRSTLLCLSAIGMISYATPVFLVALLPLGVAFYFIQKYFRVASKDLQELDDSTQLPLLCHFSETAEGLTTIRAFRHETRFKQRMLELTDTNNIAYLFLSAANRWLEVRTDYLGACIVLTASIASISGSSNSGLVGLGLLYALTITNYLNWVVRNLADLEVQMGAVKKVNSFLTMESENYEGTMDPSQVPEHWPQEGEIKIHDLCVRYENNLKPVLKHVKAYIKPGQKVGICGRTGSGKSSLSLAFFRMVDIFDGKIVIDGIDISKLPLHTLRSRLSIILQDPILFSGSIRFNLDPECKCTDDRLWEALEIAQLKNMVKSLPGGLDAVVTEGGENFSVGQRQLFCLARAFVRKSSILIMDEATASIDMATENILQKVVMTAFADRTVVTIAHRVSSIMDAGLVLVFSEGILVECDTVPNLLAHKNGLFSTLVMTNK.

The Extracellular portion of the chain corresponds to 1–30 (MSLSFCGNNISSYNINDGVLQNSCFVDALN). An N-linked (GlcNAc...) asparagine glycan is attached at N9. The chain crosses the membrane as a helical span at residues 31-51 (LVPHVFLLFITFPILFIGWGS). The Cytoplasmic segment spans residues 52-72 (QSSKVQIHHNTWLHFPGHNLR). The helical transmembrane segment at 73 to 93 (WILTFALLFVHVCEIAEGIVS) threads the bilayer. The Extracellular portion of the chain corresponds to 94 to 101 (DSRRESRH). The chain crosses the membrane as a helical span at residues 102 to 122 (LHLFMPAVMGFVATTTSIVYY). Residues 123-132 (HNIETSNFPK) lie on the Cytoplasmic side of the membrane. The helical transmembrane segment at 133–153 (LLLALFLYWVMAFITKTIKLV) threads the bilayer. Residues 154 to 167 (KYCQSGLDISNLRF) are Extracellular-facing. The helical transmembrane segment at 168–188 (CITGMMVILNGLLMAVEINVI) threads the bilayer. Residues 189-301 (RVRRYVFFMN…AFGRPILLSS (113 aa)) lie on the Cytoplasmic side of the membrane. Residues 297–597 (ILLSSTFRYL…LSTVVRFAVK (301 aa)) form the ABC transmembrane type-1 1 domain. The chain crosses the membrane as a helical span at residues 302-322 (TFRYLADLLGFAGPLCISGIV). The Extracellular portion of the chain corresponds to 323 to 350 (QRVNETQNGTNNTTGISETLSSKEFLEN). N-linked (GlcNAc...) asparagine glycosylation is found at N326, N330, N333, and N334. Residues 351 to 371 (AYVLAVLLFLALILQRTFLQA) form a helical membrane-spanning segment. Residues 372-423 (SYYVTIETGINLRGALLAMIYNKILRLSTSNLSMGEMTLGQINNLVAIETNQ) are Cytoplasmic-facing. The chain crosses the membrane as a helical span at residues 424-444 (LMWFLFLCPNLWAMPVQIIMG). Residues 445–455 (VILLYNLLGSS) are Extracellular-facing. Residues 456–476 (ALVGAAVIVLLAPIQYFIATK) traverse the membrane as a helical segment. Residues 477-531 (LAEAQKSTLDYSTERLKKTNEILKGIKLLKLYAWEHIFCKSVEETRMKELSSLKT) lie on the Cytoplasmic side of the membrane. A helical transmembrane segment spans residues 532-552 (FALYTSLSIFMNAAIPIAAVL). Residues 553 to 571 (ATFVTHAYASGNNLKPAEA) lie on the Extracellular side of the membrane. A helical transmembrane segment spans residues 572-592 (FASLSLFHILVTPLFLLSTVV). At 593-990 (RFAVKAIISV…TCWRYLTSGG (398 aa)) the chain is on the cytoplasmic side. Positions 672–912 (IKVTNGYFSW…DVELYEHWKT (241 aa)) constitute an ABC transporter 1 domain. 705-712 (GQVGCGKS) is an ATP binding site. The tract at residues 944–967 (REAKAQMEDEDEEEEEEEDEDDNM) is disordered. The span at 951–966 (EDEDEEEEEEEDEDDN) shows a compositional bias: acidic residues. The helical transmembrane segment at 991–1011 (FFLLILMIFSKLLKHSVIVAI) threads the bilayer. The 281-residue stretch at 994-1274 (LILMIFSKLL…VVRNLADLEV (281 aa)) folds into the ABC transmembrane type-1 2 domain. Residues 1012–1034 (DYWLATWTSEYSINNTGKADQTY) lie on the Extracellular side of the membrane. The helical transmembrane segment at 1035–1055 (YVAGFSILCGAGIFLCLVTSL) threads the bilayer. Residues 1056–1127 (TVEWMGLTAA…TLLCLSAIGM (72 aa)) are Cytoplasmic-facing. A helical membrane pass occupies residues 1128–1148 (ISYATPVFLVALLPLGVAFYF). At 1149 to 1245 (IQKYFRVASK…IASISGSSNS (97 aa)) the chain is on the extracellular side. Residues 1246–1266 (GLVGLGLLYALTITNYLNWVV) traverse the membrane as a helical segment. Residues 1267–1549 (RNLADLEVQM…LFSTLVMTNK (283 aa)) are Cytoplasmic-facing. The ABC transporter 2 domain maps to 1312–1546 (IKIHDLCVRY…KNGLFSTLVM (235 aa)). 1346–1353 (GRTGSGKS) lines the ATP pocket.

This sequence belongs to the ABC transporter superfamily. ABCC family. Conjugate transporter (TC 3.A.1.208) subfamily. In terms of assembly, interacts with KCNJ11. Interacts with KCNJ8.

It localises to the membrane. Its function is as follows. Subunit of ATP-sensitive potassium channels (KATP). Can form cardiac and smooth muscle-type KATP channels with KCNJ11. KCNJ11 forms the channel pore while ABCC9 is required for activation and regulation. Can form a sulfonylurea-sensitive but ATP-insensitive potassium channel with KCNJ8. This Homo sapiens (Human) protein is ATP-binding cassette sub-family C member 9 (ABCC9).